Reading from the N-terminus, the 342-residue chain is Phosphate acyltransferase (342 aa).

The protein belongs to the PlsX family. In terms of assembly, homodimer. Probably interacts with PlsY.

It localises to the cytoplasm. It catalyses the reaction a fatty acyl-[ACP] + phosphate = an acyl phosphate + holo-[ACP]. It functions in the pathway lipid metabolism; phospholipid metabolism. Functionally, catalyzes the reversible formation of acyl-phosphate (acyl-PO(4)) from acyl-[acyl-carrier-protein] (acyl-ACP). This enzyme utilizes acyl-ACP as fatty acyl donor, but not acyl-CoA. The protein is Phosphate acyltransferase of Shewanella pealeana (strain ATCC 700345 / ANG-SQ1).